We begin with the raw amino-acid sequence, 156 residues long: Small ribosomal subunit protein uS7 (156 aa).

Belongs to the universal ribosomal protein uS7 family. Part of the 30S ribosomal subunit. Contacts proteins S9 and S11.

One of the primary rRNA binding proteins, it binds directly to 16S rRNA where it nucleates assembly of the head domain of the 30S subunit. Is located at the subunit interface close to the decoding center, probably blocks exit of the E-site tRNA. The protein is Small ribosomal subunit protein uS7 of Pseudomonas entomophila (strain L48).